Consider the following 248-residue polypeptide: PF03932 family protein CutC (248 aa).

Belongs to the CutC family. Homodimer.

It localises to the cytoplasm. The polypeptide is PF03932 family protein CutC (Shigella dysenteriae serotype 1 (strain Sd197)).